Here is a 217-residue protein sequence, read N- to C-terminus: Cytochrome b5 domain-containing protein 1 (217 aa).

The region spanning 6 to 72 (PRYFTPREVS…NPKTGDVKTH (67 aa)) is the Cytochrome b5 heme-binding domain. Positions 41 and 72 each coordinate heme.

It belongs to the cytochrome b5 family.

It is found in the cytoplasm. The protein resides in the cytoskeleton. It localises to the cilium axoneme. Radial spoke stalk protein that binds heme under oxidizing conditions. Required for the coordinated beating of multiple cilia maybe by functioning in a redox signaling pathway. This Xenopus laevis (African clawed frog) protein is Cytochrome b5 domain-containing protein 1 (cyb5d1).